Consider the following 358-residue polypeptide: MKVLAAMSGGVDSSVAAARMVDAGHDVVGVHLALSTVSGTLRTGSRGCCSKEDVSDARRVADVLGIPFYVWDFAEKFQEDVIDNFVSAYARGETPNPCVQCNQRIKFSALSVRALMLGFDTVATGHYARLSGGRLRRAVDRGKDQSYVLAVLTAQQLRHAAFPIGDTLKRQVRAEAARRGLLVADKPDSHGICFIPSGNTRAFLSECIGIRRGSVVDADGTVLAEHDGVHGFTVGQRKGLGIVGPGPNGRPRYVTAIDADTATVYVGDAADLGVHTLIGRAPVFTAGAAPLGPVQCVVQIRAHGETAVAVVELIGDELFVRLCEPLRGVARGQTLVLYRLDPDGDEVLGSATIASMSA.

ATP is bound by residues 6–13 (AMSGGVDS) and L32. C101 acts as the Nucleophile in catalysis. A disulfide bond links C101 and C193. Residue G125 participates in ATP binding. Residues 143 to 145 (KDQ) form an interaction with tRNA region. C193 (cysteine persulfide intermediate) is an active-site residue.

Belongs to the MnmA/TRMU family.

Its subcellular location is the cytoplasm. The enzyme catalyses S-sulfanyl-L-cysteinyl-[protein] + uridine(34) in tRNA + AH2 + ATP = 2-thiouridine(34) in tRNA + L-cysteinyl-[protein] + A + AMP + diphosphate + H(+). Catalyzes the 2-thiolation of uridine at the wobble position (U34) of tRNA, leading to the formation of s(2)U34. In Mycobacterium leprae (strain Br4923), this protein is tRNA-specific 2-thiouridylase MnmA.